Consider the following 325-residue polypeptide: Aldose 1-epimerase (325 aa).

A substrate-binding site is contributed by 73 to 74; it reads NR. H177 serves as the catalytic Proton donor. Substrate is bound at residue D230. Catalysis depends on E283, which acts as the Proton acceptor.

This sequence belongs to the aldose epimerase family.

The enzyme catalyses alpha-D-glucose = beta-D-glucose. Its pathway is carbohydrate metabolism; hexose metabolism. The polypeptide is Aldose 1-epimerase (galM) (Bacillus subtilis (strain 168)).